Here is a 435-residue protein sequence, read N- to C-terminus: 3-phosphoshikimate 1-carboxyvinyltransferase (435 aa).

3-phosphoshikimate contacts are provided by Lys-23, Ser-24, and Arg-28. Lys-23 contributes to the phosphoenolpyruvate binding site. Phosphoenolpyruvate contacts are provided by Gly-97 and Arg-125. Ser-170, Ser-171, Gln-172, Ser-198, Asp-314, Asn-338, and Lys-342 together coordinate 3-phosphoshikimate. Gln-172 contributes to the phosphoenolpyruvate binding site. Asp-314 (proton acceptor) is an active-site residue. The phosphoenolpyruvate site is built by Arg-346, Arg-388, and Lys-413.

It belongs to the EPSP synthase family. As to quaternary structure, monomer.

It localises to the cytoplasm. The catalysed reaction is 3-phosphoshikimate + phosphoenolpyruvate = 5-O-(1-carboxyvinyl)-3-phosphoshikimate + phosphate. Its pathway is metabolic intermediate biosynthesis; chorismate biosynthesis; chorismate from D-erythrose 4-phosphate and phosphoenolpyruvate: step 6/7. In terms of biological role, catalyzes the transfer of the enolpyruvyl moiety of phosphoenolpyruvate (PEP) to the 5-hydroxyl of shikimate-3-phosphate (S3P) to produce enolpyruvyl shikimate-3-phosphate and inorganic phosphate. This is 3-phosphoshikimate 1-carboxyvinyltransferase from Sodalis glossinidius (strain morsitans).